Consider the following 329-residue polypeptide: Peroxidase 50 (329 aa).

An N-terminal signal peptide occupies residues 1–25; sequence MVVVNKTNLLLLLLSLCLTLDLSSA. Cystine bridges form between Cys36–Cys119, Cys69–Cys74, Cys125–Cys325, and Cys204–Cys236. Residue His67 is the Proton acceptor of the active site. Positions 68, 71, 73, 75, and 77 each coordinate Ca(2+). Pro167 is a binding site for substrate. His197 is a binding site for heme b. Residue Thr198 participates in Ca(2+) binding. An N-linked (GlcNAc...) asparagine glycan is attached at Asn215. Ca(2+) is bound by residues Asp249, Thr252, and Asp257.

This sequence belongs to the peroxidase family. Classical plant (class III) peroxidase subfamily. It depends on heme b as a cofactor. Ca(2+) is required as a cofactor. Expressed in roots and leaves.

It localises to the secreted. The catalysed reaction is 2 a phenolic donor + H2O2 = 2 a phenolic radical donor + 2 H2O. Functionally, removal of H(2)O(2), oxidation of toxic reductants, biosynthesis and degradation of lignin, suberization, auxin catabolism, response to environmental stresses such as wounding, pathogen attack and oxidative stress. These functions might be dependent on each isozyme/isoform in each plant tissue. Its function is as follows. Exhibits a Ca(2+)-pectate binding affinity which could be interpreted in vivo as a specificity to interact with the pectic structure of the cell wall. The protein is Peroxidase 50 (PER50) of Arabidopsis thaliana (Mouse-ear cress).